Reading from the N-terminus, the 322-residue chain is Probable cAMP-dependent protein kinase catalytic subunit (322 aa).

Residues 7 to 261 (FEFVKVVGVG…ICEIMGHPFF (255 aa)) form the Protein kinase domain. ATP-binding positions include 13-21 (VGVGAFGKV) and K37. The active-site Proton acceptor is the D132. An AGC-kinase C-terminal domain is found at 262-322 (KGIDWHEVES…KHLYKVSKGL (61 aa)).

It belongs to the protein kinase superfamily. AGC Ser/Thr protein kinase family. cAMP subfamily.

The enzyme catalyses L-seryl-[protein] + ATP = O-phospho-L-seryl-[protein] + ADP + H(+). The catalysed reaction is L-threonyl-[protein] + ATP = O-phospho-L-threonyl-[protein] + ADP + H(+). The polypeptide is Probable cAMP-dependent protein kinase catalytic subunit (Encephalitozoon cuniculi (strain GB-M1) (Microsporidian parasite)).